Here is a 485-residue protein sequence, read N- to C-terminus: UDP-N-acetylmuramate--L-alanine ligase (485 aa).

An ATP-binding site is contributed by 112-118 (GTHGKTT).

This sequence belongs to the MurCDEF family.

It localises to the cytoplasm. It catalyses the reaction UDP-N-acetyl-alpha-D-muramate + L-alanine + ATP = UDP-N-acetyl-alpha-D-muramoyl-L-alanine + ADP + phosphate + H(+). It functions in the pathway cell wall biogenesis; peptidoglycan biosynthesis. Functionally, cell wall formation. This Variovorax paradoxus (strain S110) protein is UDP-N-acetylmuramate--L-alanine ligase.